Reading from the N-terminus, the 111-residue chain is Large ribosomal subunit protein uL22 (111 aa).

Belongs to the universal ribosomal protein uL22 family. Part of the 50S ribosomal subunit.

Its function is as follows. This protein binds specifically to 23S rRNA; its binding is stimulated by other ribosomal proteins, e.g. L4, L17, and L20. It is important during the early stages of 50S assembly. It makes multiple contacts with different domains of the 23S rRNA in the assembled 50S subunit and ribosome. In terms of biological role, the globular domain of the protein is located near the polypeptide exit tunnel on the outside of the subunit, while an extended beta-hairpin is found that lines the wall of the exit tunnel in the center of the 70S ribosome. This Chlamydia abortus (strain DSM 27085 / S26/3) (Chlamydophila abortus) protein is Large ribosomal subunit protein uL22.